The primary structure comprises 268 residues: Lipase (268 aa).

An N-terminal signal peptide occupies residues 1-34 (MRLSRRAATASALLLTPALALFGASAAVSAPRIQ). Ser44 functions as the Nucleophile in the catalytic mechanism. Cystine bridges form between Cys61/Cys86, Cys127/Cys135, and Cys185/Cys232. Residue His250 is part of the active site.

In terms of assembly, monomer.

The protein resides in the secreted. It carries out the reaction a triacylglycerol + H2O = a diacylglycerol + a fatty acid + H(+). It catalyses the reaction hexadecanoyl-CoA + H2O = hexadecanoate + CoA + H(+). Inhibited by 3,4-dichloroisocoumarin and tetrahydrolipstatin in the absence of substrate, but by phenylmethylsulfonyl fluoride (PMSF) only in the presence of substrate. Several water-miscible solvents enhance the lipase hydrolytic activity in vitro. Tetrahydrofuran and N,N-dimethylformamide (both 50%) inactivate the enzyme with t1/2 of 5 minutes and t1/2 of 2 hours, respectively. Catalyzes the hydrolysis of p-nitrophenyl esters, alpha- and beta-naphthyl esters, and triacylglycerols, with a preference for medium acyl chain length (C8-C12). Shows a much higher hydrolysis rate of glycerol esters of unsaturated C16 and C18 fatty acids than that of their saturated counterparts, and a preference for cis double bond. Is also able to hydrolyze several natural oils and Tween detergents. Also displays thioesterase and phospholipase activities, towards palmitoyl-coenzyme A and diheptanoyl glycerophosphocholine, respectively. Shows transesterification activity of racemic 1-phenyl ethanol with vinyl acetate in hexane, proceeding with partial (R)-enantioselectivity. The polypeptide is Lipase (Streptomyces rimosus).